Reading from the N-terminus, the 288-residue chain is Protoheme IX farnesyltransferase (288 aa).

9 consecutive transmembrane segments (helical) span residues 16–36, 37–57, 88–108, 111–131, 138–158, 162–182, 210–230, 236–256, and 265–285; these read VWSL…NRFT, LTNI…SMGA, VKGL…LLFF, YLAA…YSYL, WNII…WYTV, FSVL…IHVW, AICI…PVFF, TYMI…VLFV, and LKLF…VLIF.

It belongs to the UbiA prenyltransferase family. Protoheme IX farnesyltransferase subfamily.

It localises to the cell membrane. It catalyses the reaction heme b + (2E,6E)-farnesyl diphosphate + H2O = Fe(II)-heme o + diphosphate. The protein operates within porphyrin-containing compound metabolism; heme O biosynthesis; heme O from protoheme: step 1/1. In terms of biological role, converts heme B (protoheme IX) to heme O by substitution of the vinyl group on carbon 2 of heme B porphyrin ring with a hydroxyethyl farnesyl side group. The chain is Protoheme IX farnesyltransferase from Thermoplasma volcanium (strain ATCC 51530 / DSM 4299 / JCM 9571 / NBRC 15438 / GSS1).